The following is a 404-amino-acid chain: Multidrug resistance protein MdtG (404 aa).

A run of 11 helical transmembrane segments spans residues 19–39 (LGCF…PLYV), 56–76 (LVFS…GGLA), 90–110 (LGMA…QFLI), 113–133 (ALLG…ATQV), 144–164 (TLST…GLLA), 171–191 (PVFF…FFFI), 222–242 (LFVT…ILTL), 254–274 (IAFI…LSAP), 288–308 (ILIV…FVQT), 317–337 (FLLG…LVYN), and 376–396 (AVFC…WNSL).

The protein belongs to the major facilitator superfamily. DHA1 family. MdtG (TC 2.A.1.2.20) subfamily.

The protein resides in the cell inner membrane. The polypeptide is Multidrug resistance protein MdtG (Salmonella dublin (strain CT_02021853)).